A 462-amino-acid polypeptide reads, in one-letter code: tRNA-2-methylthio-N(6)-dimethylallyladenosine synthase (462 aa).

In terms of domain architecture, MTTase N-terminal spans 2–117; that stretch reads KRYFIHTFGC…LPDIIGRVSA (116 aa). Residues Cys-11, Cys-47, Cys-80, Cys-157, Cys-161, and Cys-164 each contribute to the [4Fe-4S] cluster site. Positions 143 to 372 constitute a Radical SAM core domain; sequence SRGKVTEFVT…QKLQRRISGE (230 aa). The 63-residue stretch at 375-437 folds into the TRAM domain; that stretch reads AALVGSEVEV…PNQLAGKQVA (63 aa).

The protein belongs to the methylthiotransferase family. MiaB subfamily. In terms of assembly, monomer. [4Fe-4S] cluster serves as cofactor.

Its subcellular location is the cytoplasm. The catalysed reaction is N(6)-dimethylallyladenosine(37) in tRNA + (sulfur carrier)-SH + AH2 + 2 S-adenosyl-L-methionine = 2-methylsulfanyl-N(6)-dimethylallyladenosine(37) in tRNA + (sulfur carrier)-H + 5'-deoxyadenosine + L-methionine + A + S-adenosyl-L-homocysteine + 2 H(+). Functionally, catalyzes the methylthiolation of N6-(dimethylallyl)adenosine (i(6)A), leading to the formation of 2-methylthio-N6-(dimethylallyl)adenosine (ms(2)i(6)A) at position 37 in tRNAs that read codons beginning with uridine. This chain is tRNA-2-methylthio-N(6)-dimethylallyladenosine synthase, found in Myxococcus xanthus (strain DK1622).